The chain runs to 192 residues: UPF0149 protein VIBHAR_03551 (192 aa).

The protein belongs to the UPF0149 family.

This chain is UPF0149 protein VIBHAR_03551, found in Vibrio campbellii (strain ATCC BAA-1116).